Consider the following 859-residue polypeptide: Heterogeneous nuclear ribonucleoprotein U-like protein 1 (859 aa).

The necessary for interaction with HRMT1L1 stretch occupies residues 1–103 (MDVRRLKVNE…GPDGHYVMDN (103 aa)). The SAP domain occupies 3-37 (VRRLKVNELREELQRRGLDTRGLKAELAERLLAAL). Residues 36–131 (ALEAEEPEDE…SSYDRRPLDM (96 aa)) form a disordered region. Acidic residues predominate over residues 38–54 (EAEEPEDERELEADDDP). A compositionally biased stretch (pro residues) spans 77 to 88 (QPPPPGLQPHPE). Residue lysine 117 forms a Glycyl lysine isopeptide (Lys-Gly) (interchain with G-Cter in SUMO1); alternate linkage. Residue lysine 117 forms a Glycyl lysine isopeptide (Lys-Gly) (interchain with G-Cter in SUMO2); alternate linkage. Residues 118–130 (QENESSYDRRPLD) are compositionally biased toward basic and acidic residues. Lysine 143 is covalently cross-linked (Glycyl lysine isopeptide (Lys-Gly) (interchain with G-Cter in SUMO1); alternate). A Glycyl lysine isopeptide (Lys-Gly) (interchain with G-Cter in SUMO2); alternate cross-link involves residue lysine 143. The interval 146–206 (MKQEAPPSFL…QPPAEEDEDD (61 aa)) is disordered. Residues lysine 147 and lysine 163 each participate in a glycyl lysine isopeptide (Lys-Gly) (interchain with G-Cter in SUMO2) cross-link. Positions 174-193 (RPFEENRGRGYFEHREDRRG) are enriched in basic and acidic residues. Positions 192–389 (RGRSPQPPAE…VEFNFGQRAE (198 aa)) constitute a B30.2/SPRY domain. Serine 195 carries the phosphoserine modification. The residue at position 210 (threonine 210) is a Phosphothreonine. Positions 214 to 859 (IDTYNCDLHF…GSTQGGTSTQ (646 aa)) are necessary for interaction with TP53. Residues lysine 271 and lysine 450 each participate in a glycyl lysine isopeptide (Lys-Gly) (interchain with G-Cter in SUMO2) cross-link. Positions 457–595 (NAIMDKMRVM…EEADKLVRQY (139 aa)) are necessary for interaction with BRD7 and transcriptional activation. Phosphoserine is present on serine 513. A Glycyl lysine isopeptide (Lys-Gly) (interchain with G-Cter in SUMO2) cross-link involves residue lysine 540. Residues 595 to 612 (YNEEGRKAGPPPEKRFDS) show a composition bias toward basic and acidic residues. Residues 595 to 814 (YNEEGRKAGP…PPTAQTYPQP (220 aa)) are disordered. 5 tandem repeats follow at residues 613-615 (RGG), 620-622 (RGG), 639-641 (RGG), 645-647 (RGG), and 659-661 (RGG). 2 stretches are compositionally biased toward gly residues: residues 613 to 626 (RGGG…GGGF) and 634 to 670 (PPGG…GGGY). The interval 613–661 (RGGGFRGRGGGGGFQRYDNRGPPGGNRGGFQNRGGGGGSGGGGGNYRGG) is 5 X 3 AA repeats of R-G-G. The interval 613–661 (RGGGFRGRGGGGGFQRYDNRGPPGGNRGGFQNRGGGGGSGGGGGNYRGG) is necessary for transcription repression. Asymmetric dimethylarginine is present on arginine 639. Arginine 645 and arginine 659 each carry asymmetric dimethylarginine; alternate. Residues arginine 645 and arginine 659 each carry the omega-N-methylarginine; alternate modification. Omega-N-methylarginine is present on residues arginine 664 and arginine 674. Over residues 671–696 (NQNRWGNNNRDNNNSNNRGNYNRAPQ) the composition is skewed to low complexity. The segment covering 697–720 (QQPPPQQPPPPQPPPQQPPPPPSY) has biased composition (pro residues). The residue at position 721 (serine 721) is a Phosphoserine. Positions 728 to 744 (GASSYNKNSNIPGSSAN) are enriched in polar residues. A compositionally biased stretch (low complexity) spans 745 to 775 (TSTPTVSSYTPPQPSYSQPPYNQGGYTQGYT). 2 stretches are compositionally biased toward pro residues: residues 776–786 (APPPPPPPPPA) and 796–807 (NPAPYTPPPPPT).

In terms of assembly, interacts with BRD7, PRMT2, TP53 and NXF1. Associates with histones and BRD7. Methylated.

It is found in the nucleus. Acts as a basic transcriptional regulator. Represses basic transcription driven by several virus and cellular promoters. When associated with BRD7, activates transcription of glucocorticoid-responsive promoter in the absence of ligand-stimulation. Also plays a role in mRNA processing and transport. Binds avidly to poly(G) and poly(C) RNA homopolymers in vitro. The chain is Heterogeneous nuclear ribonucleoprotein U-like protein 1 (Hnrnpul1) from Mus musculus (Mouse).